The primary structure comprises 121 residues: Neuromedin-B (121 aa).

A signal peptide spans 1 to 24; it reads MTLRARGARLLGGLLFFTLLAAGA. Methionine 56 is subject to Methionine amide. Residues 60-121 constitute a propeptide that is removed on maturation; it reads SLEPPNPSLL…RRLLVQTLEK (62 aa).

It belongs to the bombesin/neuromedin-B/ranatensin family. In terms of tissue distribution, higher expression in the central nervous system (CNS) than in peripheral tissues. Highest levels are found in the olfactory bulb. Relatively high levels in the CNS (including the cerebral cortex, cerebellum, spinal cord, medulla oblongata, midbrain, hypothalamus, hippocampus, and hypophysis) and in peripheral tissues such as the pancreas, adrenal gland, testis, ovary and cecum. Moderate levels are found in the rectum, heart and pons with low expression levels detected in the bone marrow and duodenum. Other tissues show no or low levels of expression.

The protein localises to the secreted. The protein resides in the cell projection. It is found in the neuron projection. Stimulates smooth muscle contraction. Induces sighing by acting directly on the pre-Botzinger complex, a cluster of several thousand neurons in the ventrolateral medulla responsible for inspiration during respiratory activity. Contributes to the induction of sneezing following exposure to chemical irritants or allergens which causes release of NMB by nasal sensory neurons and activation of NMBR-expressing neurons in the sneeze-evoking region of the brainstem. These in turn activate neurons of the caudal ventral respiratory group, giving rise to the sneezing response. Contributes to induction of acute itch, possibly through activation of the NMBR receptor on dorsal root ganglion neurons. Increases expression of NMBR and steroidogenic mediators STAR, CYP11A1 and HSD3B1 in Leydig cells, induces secretion of testosterone by Leydig cells and also promotes Leydig cell proliferation. Plays a role in the innate immune response to influenza A virus infection by enhancing interferon alpha expression and reducing expression of IL6. Plays a role in CSF1-induced proliferation of osteoclast precursors by contributing to positive regulation of the expression of the CSF1 receptor CSF1R. The sequence is that of Neuromedin-B (NMB) from Sus scrofa (Pig).